Reading from the N-terminus, the 326-residue chain is Tagatose 1,6-diphosphate aldolase (326 aa).

This sequence belongs to the aldolase LacD family.

The catalysed reaction is D-tagatofuranose 1,6-bisphosphate = D-glyceraldehyde 3-phosphate + dihydroxyacetone phosphate. The protein operates within carbohydrate metabolism; D-tagatose 6-phosphate degradation; D-glyceraldehyde 3-phosphate and glycerone phosphate from D-tagatose 6-phosphate: step 2/2. In Streptococcus pneumoniae serotype 4 (strain ATCC BAA-334 / TIGR4), this protein is Tagatose 1,6-diphosphate aldolase.